Here is a 479-residue protein sequence, read N- to C-terminus: Adenosylhomocysteinase (479 aa).

Substrate is bound by residues threonine 56, aspartate 133, and glutamate 199. NAD(+) is bound at residue 200-202; the sequence is TTT. Residues lysine 229 and aspartate 233 each coordinate substrate. Residues asparagine 234, 263-268, glutamate 286, asparagine 321, 342-344, and asparagine 390 contribute to the NAD(+) site; these read GYGDVG and IGH.

This sequence belongs to the adenosylhomocysteinase family. In terms of assembly, homotetramer. The cofactor is NAD(+).

The catalysed reaction is S-adenosyl-L-homocysteine + H2O = L-homocysteine + adenosine. It participates in amino-acid biosynthesis; L-homocysteine biosynthesis; L-homocysteine from S-adenosyl-L-homocysteine: step 1/1. Functionally, adenosylhomocysteine is a competitive inhibitor of S-adenosyl-L-methionine-dependent methyl transferase reactions; therefore adenosylhomocysteinase may play a key role in the control of methylations via regulation of the intracellular concentration of adenosylhomocysteine. This chain is Adenosylhomocysteinase, found in Plasmodium yoelii yoelii.